A 309-amino-acid chain; its full sequence is Taste receptor type 2 member 43 (309 aa).

Met1 is a topological domain (extracellular). Residues 2–22 (ITFLPIIFSSLVVVTFVIGNF) traverse the membrane as a helical segment. At 23 to 46 (ANGFIALVNSIEWFKRQKISFADQ) the chain is on the cytoplasmic side. The chain crosses the membrane as a helical span at residues 47–67 (ILTALAVSRVGLLWVLLLNWY). Over 68-86 (STVLNPAFNSVEVRTTAYN) the chain is Extracellular. The helical transmembrane segment at 87–107 (IWAVINHFSNWLATSLSIFYL) threads the bilayer. The Cytoplasmic segment spans residues 108 to 126 (LKIANFSNFIFLHLKRRVK). Residues 127–147 (SVILVMLLGPLLFLACHLFVI) traverse the membrane as a helical segment. The Extracellular segment spans residues 148–178 (NMNEIVRTKEFEGNMTWKIKLKSAMYFSNMT). N-linked (GlcNAc...) asparagine glycosylation is found at Asn161 and Asn176. The chain crosses the membrane as a helical span at residues 179–199 (VTMVANLVPFTLTLLSFLLLI). Over 200-229 (CSLCKHLKKMQLHGKGSQDPSTKVHIKVLQ) the chain is Cytoplasmic. Residues 230-250 (TVISFLLLCAIYFLSIMISVW) traverse the membrane as a helical segment. The Extracellular segment spans residues 251 to 259 (SFGSLKNKP). Residues 260 to 280 (VFMFCKAMRFSYPSIHPFILI) traverse the membrane as a helical segment. At 281–309 (WGNKKLKQTFLSVFWQMRYWVKGEKTSSP) the chain is on the cytoplasmic side.

This sequence belongs to the G-protein coupled receptor T2R family.

It is found in the membrane. Its subcellular location is the cell projection. The protein resides in the cilium membrane. Functionally, gustducin-coupled receptor immplicated in the perception of bitter compounds in the oral cavity and the gastrointestinal tract. Signals through PLCB2 and the calcium-regulated cation channel TRPM5. Activated by the sulfonyl amide sweeteners saccharin and acesulfame K. In airway epithelial cells, binding of bitter compounds increases the intracellular calcium ion concentration and stimulates ciliary beat frequency. May act as chemosensory receptors in airway epithelial cells to detect and eliminate potential noxious agents from the airways. The protein is Taste receptor type 2 member 43 (TAS2R43) of Pan troglodytes (Chimpanzee).